A 255-amino-acid polypeptide reads, in one-letter code: MQRRPLVAGNWKMHGSRESVGQLLRALKHGCERLETAELAVFPPFVFLQQCEEALMRTQISWGAQDVSEFERGAYTGEVSAAMLRDFHCRYVIVGHSERRQRHGETNEQVAAKVRAALRCGIRPIICVGETEKQRNANQTLSVIKEQLAVVLQMNDNLASLEGMVVAYEPIWAIGTGKNATPSQAEEVHAALRDQLHRQDATLAESTRLLYGGSVKPDNAAALFEMPNIDGALVGGASLEAEQFLKIGQQCNQSF.

Substrate is bound at residue 10–12; the sequence is NWK. The Electrophile role is filled by His96. Glu169 (proton acceptor) is an active-site residue. Substrate-binding positions include Gly175, Ser214, and 235-236; that span reads GG.

It belongs to the triosephosphate isomerase family. Homodimer.

The protein resides in the cytoplasm. It catalyses the reaction D-glyceraldehyde 3-phosphate = dihydroxyacetone phosphate. It functions in the pathway carbohydrate biosynthesis; gluconeogenesis. Its pathway is carbohydrate degradation; glycolysis; D-glyceraldehyde 3-phosphate from glycerone phosphate: step 1/1. Involved in the gluconeogenesis. Catalyzes stereospecifically the conversion of dihydroxyacetone phosphate (DHAP) to D-glyceraldehyde-3-phosphate (G3P). This Coxiella burnetii (strain Dugway 5J108-111) protein is Triosephosphate isomerase.